The sequence spans 122 residues: Large ribosomal subunit protein uL18 (122 aa).

The protein belongs to the universal ribosomal protein uL18 family. Part of the 50S ribosomal subunit; part of the 5S rRNA/L5/L18/L25 subcomplex. Contacts the 5S and 23S rRNAs.

Functionally, this is one of the proteins that bind and probably mediate the attachment of the 5S RNA into the large ribosomal subunit, where it forms part of the central protuberance. The chain is Large ribosomal subunit protein uL18 from Desulfitobacterium hafniense (strain Y51).